Reading from the N-terminus, the 273-residue chain is Mitochondrial distribution and morphology protein 12 (273 aa).

One can recognise an SMP-LTD domain in the interval 1–260 (MSFDINWEQL…WPSWINFDFY (260 aa)). Residues 76–98 (MSAEEETEGSDDEGYGGDRVRNR) form a disordered region. The segment covering 78 to 90 (AEEETEGSDDEGY) has biased composition (acidic residues).

This sequence belongs to the MDM12 family. In terms of assembly, component of the ER-mitochondria encounter structure (ERMES) or MDM complex, composed of MMM1, MDM10, MDM12 and MDM34. An MMM1 homodimer associates with one molecule of MDM12 on each side in a pairwise head-to-tail manner, and the SMP-LTD domains of MMM1 and MDM12 generate a continuous hydrophobic tunnel for phospholipid trafficking.

The protein resides in the mitochondrion outer membrane. It is found in the endoplasmic reticulum membrane. In terms of biological role, component of the ERMES/MDM complex, which serves as a molecular tether to connect the endoplasmic reticulum (ER) and mitochondria. Components of this complex are involved in the control of mitochondrial shape and protein biogenesis, and function in nonvesicular lipid trafficking between the ER and mitochondria. MDM12 is required for the interaction of the ER-resident membrane protein MMM1 and the outer mitochondrial membrane-resident beta-barrel protein MDM10. The MDM12-MMM1 subcomplex functions in the major beta-barrel assembly pathway that is responsible for biogenesis of all mitochondrial outer membrane beta-barrel proteins, and acts in a late step after the SAM complex. The MDM10-MDM12-MMM1 subcomplex further acts in the TOM40-specific pathway after the action of the MDM12-MMM1 complex. Essential for establishing and maintaining the structure of mitochondria and maintenance of mtDNA nucleoids. The polypeptide is Mitochondrial distribution and morphology protein 12 (Vanderwaltozyma polyspora (strain ATCC 22028 / DSM 70294 / BCRC 21397 / CBS 2163 / NBRC 10782 / NRRL Y-8283 / UCD 57-17) (Kluyveromyces polysporus)).